The sequence spans 490 residues: 5-hydroxytryptamine receptor 3A (490 aa).

A signal peptide spans 1–19; it reads MVLWLQLALLALLLPTSLA. Over 20-249 the chain is Extracellular; the sequence is QGEVRGKGTA…FYVVIRRRPL (230 aa). N-linked (GlcNAc...) asparagine glycans are attached at residues Asn33, Asn109, Asn175, and Asn191. Cys162 and Cys176 form a disulfide bridge. Residues 250 to 270 form a helical membrane-spanning segment; it reads FYAVTLLLPSIFLMIVDIVGF. The Cytoplasmic portion of the chain corresponds to 271-285; sequence YLPPDSGERVSFKIT. A helical membrane pass occupies residues 286-306; that stretch reads LLLGYSVFLIIVSDTLPATAI. Residues 307-312 lie on the Extracellular side of the membrane; the sequence is GTPLIS. Residues 313–333 traverse the membrane as a helical segment; it reads VYFVVCMALLVISLAETILIV. The Cytoplasmic segment spans residues 334–467; that stretch reads RLVHKQDLQQ…GSVLDKLLFR (134 aa). The tract at residues 401-422 is disordered; sequence GGPQDLEKTSRGRGSPPPPPRE. The interval 426–462 is HA-stretch; determines single-channel conductance in 5-HT3 receptors; that stretch reads AMCGLLQELASIRHFLEKREETREVARDWLRVGSVLD. Residues 468–488 traverse the membrane as a helical segment; that stretch reads VYLLAVLAYSITLVTLWSVWH. Topologically, residues 489 to 490 are extracellular; the sequence is YA.

The protein belongs to the ligand-gated ion channel (TC 1.A.9) family. 5-hydroxytryptamine receptor (TC 1.A.9.2) subfamily. HTR3A sub-subfamily. As to quaternary structure, forms homopentameric as well as heteropentameric serotonin-activated cation-selective channel complexes with HTR3B or HTR3C or HTR3D or HTR3E. The homomeric complex is functional but exhibits low conductance with modified voltage dependence, and decreased agonist and antagonist affinity. Heteropentameric complexes display properties which resemble that of neuronal serotonin-activated channels in vivo. Interacts with RIC3. In terms of tissue distribution, expressed in cortex, intestine and liver. Not expressed in muscle or spleen.

Its subcellular location is the postsynaptic cell membrane. The protein localises to the cell membrane. The catalysed reaction is Na(+)(in) = Na(+)(out). The enzyme catalyses K(+)(in) = K(+)(out). It carries out the reaction Ca(2+)(in) = Ca(2+)(out). It catalyses the reaction Mg(2+)(in) = Mg(2+)(out). Its function is as follows. Forms serotonin (5-hydroxytryptamine/5-HT3)-activated cation-selective channel complexes, which when activated cause fast, depolarizing responses in neurons. This chain is 5-hydroxytryptamine receptor 3A, found in Cavia porcellus (Guinea pig).